Consider the following 182-residue polypeptide: Large ribosomal subunit protein uL10 (182 aa).

It belongs to the universal ribosomal protein uL10 family. As to quaternary structure, part of the ribosomal stalk of the 50S ribosomal subunit. The N-terminus interacts with L11 and the large rRNA to form the base of the stalk. The C-terminus forms an elongated spine to which L12 dimers bind in a sequential fashion forming a multimeric L10(L12)X complex.

Its function is as follows. Forms part of the ribosomal stalk, playing a central role in the interaction of the ribosome with GTP-bound translation factors. This Parafrankia sp. (strain EAN1pec) protein is Large ribosomal subunit protein uL10.